We begin with the raw amino-acid sequence, 449 residues long: Keratin, type I cuticular Ha7 (449 aa).

The interval 1 to 104 (MTSFYSTSSC…YGKNTLNGHE (104 aa)) is head. Residues 104–415 (EKETMKFLND…NLLESEDCKL (312 aa)) enclose the IF rod domain. The coil 1A stretch occupies residues 105 to 139 (KETMKFLNDRLANYLEKVRQLEQENAELETTLLER). A linker 1 region spans residues 140–150 (SKCHESTVCPD). The interval 151–251 (YQSYFRTIEE…HEQEVKILRS (101 aa)) is coil 1B. The segment at 252–267 (QLGEKFRIELDIEPTI) is linker 12. The interval 268-411 (DLNRVLGEMR…ATYRNLLESE (144 aa)) is coil 2. Residues 416–449 (PCNPCSTPASCTSCPSCGPVTGGSPSGHGASMGR) are tail.

The protein belongs to the intermediate filament family.

This chain is Keratin, type I cuticular Ha7 (KRT37), found in Homo sapiens (Human).